The primary structure comprises 404 residues: tRNA-specific 2-thiouridylase MnmA (404 aa).

ATP is bound by residues 42–49 (GLSGGVDS) and Leu68. Residue Cys129 is the Nucleophile of the active site. Cys129 and Cys239 form a disulfide bridge. Residue Gly154 coordinates ATP. Positions 189–191 (KDQ) are interaction with tRNA. Cys239 (cysteine persulfide intermediate) is an active-site residue. The interval 344–345 (RY) is interaction with tRNA.

This sequence belongs to the MnmA/TRMU family.

Its subcellular location is the cytoplasm. It carries out the reaction S-sulfanyl-L-cysteinyl-[protein] + uridine(34) in tRNA + AH2 + ATP = 2-thiouridine(34) in tRNA + L-cysteinyl-[protein] + A + AMP + diphosphate + H(+). Its function is as follows. Catalyzes the 2-thiolation of uridine at the wobble position (U34) of tRNA, leading to the formation of s(2)U34. The sequence is that of tRNA-specific 2-thiouridylase MnmA from Prochlorococcus marinus (strain NATL1A).